The following is a 562-amino-acid chain: NAD-dependent malic enzyme (562 aa).

The active-site Proton donor is Tyr101. Position 154 (Arg154) interacts with NAD(+). The active-site Proton acceptor is Lys172. Residues Glu243, Asp244, and Asp267 each coordinate a divalent metal cation. Asp267 and Asn415 together coordinate NAD(+).

It belongs to the malic enzymes family. In terms of assembly, homotetramer. The cofactor is Mg(2+). Requires Mn(2+) as cofactor.

The catalysed reaction is (S)-malate + NAD(+) = pyruvate + CO2 + NADH. It catalyses the reaction oxaloacetate + H(+) = pyruvate + CO2. This chain is NAD-dependent malic enzyme, found in Aliivibrio salmonicida (strain LFI1238) (Vibrio salmonicida (strain LFI1238)).